Reading from the N-terminus, the 131-residue chain is UPF0146 protein PYRAB01940 (131 aa).

This sequence belongs to the UPF0146 family.

This Pyrococcus abyssi (strain GE5 / Orsay) protein is UPF0146 protein PYRAB01940.